Reading from the N-terminus, the 114-residue chain is Amphinase-4 (114 aa).

Catalysis depends on His-15, which acts as the Proton acceptor. Intrachain disulfides connect Cys-26-Cys-79, Cys-41-Cys-85, Cys-59-Cys-100, and Cys-97-Cys-114. Residue Asn-27 is glycosylated (N-linked (GlcNAc...) asparagine). Lys-42–Thr-46 is a substrate binding site. N-linked (GlcNAc...) asparagine glycosylation is found at Asn-67 and Asn-91. His-107 serves as the catalytic Proton donor.

The protein belongs to the pancreatic ribonuclease family. As to quaternary structure, monomer. There are at least five different forms arising from glycan heterogeneity.

The protein localises to the secreted. Its function is as follows. Endonuclease, hydrolyzes highly polymerized RNA, poly(U) and poly(C), and the dinucleotides CpA and UpA. Hydrolyzes rCA, rUA and rUG. Has cytotoxic activity against cultured human submaxillary gland carcinoma cells. The protein is Amphinase-4 of Lithobates pipiens (Northern leopard frog).